The following is a 339-amino-acid chain: Serine racemase (339 aa).

Residues serine 43 and lysine 63 each coordinate ATP. Lysine 68 acts as the Proton acceptor in catalysis. Lysine 68 carries the post-translational modification N6-(pyridoxal phosphate)lysine. Threonine 90 provides a ligand contact to Ca(2+). The Proton acceptor role is filled by serine 93. Asparagine 95 contacts pyridoxal 5'-phosphate. Position 122 is an S-nitrosocysteine (cysteine 122). Residue tyrosine 130 coordinates ATP. Aspartate 187 lines the Mg(2+) pocket. Glycine 195, glycine 196, and glycine 197 together coordinate pyridoxal 5'-phosphate. Residues glutamate 219, alanine 223, and aspartate 225 each coordinate Ca(2+). Glutamate 219, alanine 223, and aspartate 225 together coordinate Mg(2+). Glutamate 219, alanine 223, and aspartate 225 together coordinate Mn(2+). Residue lysine 287 participates in ATP binding. Serine 323 lines the pyridoxal 5'-phosphate pocket. Residue asparagine 326 participates in ATP binding.

Belongs to the serine/threonine dehydratase family. Mg(2+) serves as cofactor. It depends on Mn(2+) as a cofactor. The cofactor is Ca(2+). Pyridoxal 5'-phosphate is required as a cofactor.

The catalysed reaction is L-serine = D-serine. The enzyme catalyses L-serine = pyruvate + NH4(+). It carries out the reaction D-serine = pyruvate + NH4(+). Functionally, catalyzes the synthesis of D-serine from L-serine. Has dehydratase activity towards both L-serine and D-serine. The protein is Serine racemase of Oryza sativa subsp. indica (Rice).